The following is a 367-amino-acid chain: Phthiodiolone/phenolphthiodiolone dimycocerosates ketoreductase (367 aa).

This sequence belongs to the mer family. Phthiodiolone/phenolphthiodiolone dimycocerosates ketoreductase subfamily.

Its function is as follows. Catalyzes the reduction of the keto moiety of phthiodiolone dimycocerosates (DIM B) and glycosylated phenolphthiodiolone dimycocerosates to form the intermediate compounds phthiotriol and glycosylated phenolphthiotriol dimycocerosates during phthiocerol dimycocerosates (DIM A) and glycosylated phenolphthiocerol dimycocerosates (PGL) biosynthesis. This is Phthiodiolone/phenolphthiodiolone dimycocerosates ketoreductase from Mycobacterium kansasii.